The following is a 680-amino-acid chain: tRNA 5-methylaminomethyl-2-thiouridine biosynthesis bifunctional protein MnmC (680 aa).

A tRNA (mnm(5)s(2)U34)-methyltransferase region spans residues 1–267; it reads MTAEPNKPCQ…MAAILSSDAP (267 aa). Positions 273-680 are FAD-dependent cmnm(5)s(2)U34 oxidoreductase; that stretch reads IGGGLASAHL…LRKLLKGKAL (408 aa).

The protein in the N-terminal section; belongs to the methyltransferase superfamily. tRNA (mnm(5)s(2)U34)-methyltransferase family. It in the C-terminal section; belongs to the DAO family. FAD serves as cofactor.

It localises to the cytoplasm. It carries out the reaction 5-aminomethyl-2-thiouridine(34) in tRNA + S-adenosyl-L-methionine = 5-methylaminomethyl-2-thiouridine(34) in tRNA + S-adenosyl-L-homocysteine + H(+). Its function is as follows. Catalyzes the last two steps in the biosynthesis of 5-methylaminomethyl-2-thiouridine (mnm(5)s(2)U) at the wobble position (U34) in tRNA. Catalyzes the FAD-dependent demodification of cmnm(5)s(2)U34 to nm(5)s(2)U34, followed by the transfer of a methyl group from S-adenosyl-L-methionine to nm(5)s(2)U34, to form mnm(5)s(2)U34. The chain is tRNA 5-methylaminomethyl-2-thiouridine biosynthesis bifunctional protein MnmC from Shewanella putrefaciens (strain CN-32 / ATCC BAA-453).